The sequence spans 302 residues: Probable alpha-L-glutamate ligase (302 aa).

Residues 104-287 enclose the ATP-grasp domain; sequence LQLLSRKGVG…VAGLLIKFIE (184 aa). ATP-binding positions include K141, 178–179, D187, and 211–213; these read EY and RSN. Mg(2+)-binding residues include D248, E260, and N262. Positions 248, 260, and 262 each coordinate Mn(2+).

The protein belongs to the RimK family. Requires Mg(2+) as cofactor. Mn(2+) serves as cofactor.

The protein is Probable alpha-L-glutamate ligase of Alcanivorax borkumensis (strain ATCC 700651 / DSM 11573 / NCIMB 13689 / SK2).